The primary structure comprises 176 residues: Large ribosomal subunit protein eL6A (176 aa).

An N-acetylserine modification is found at serine 2. Serine 12 carries the post-translational modification Phosphoserine. Lysine 128 participates in a covalent cross-link: Glycyl lysine isopeptide (Lys-Gly) (interchain with G-Cter in ubiquitin).

It belongs to the eukaryotic ribosomal protein eL6 family. Component of the large ribosomal subunit (LSU). Mature yeast ribosomes consist of a small (40S) and a large (60S) subunit. The 40S small subunit contains 1 molecule of ribosomal RNA (18S rRNA) and 33 different proteins (encoded by 57 genes). The large 60S subunit contains 3 rRNA molecules (25S, 5.8S and 5S rRNA) and 46 different proteins (encoded by 81 genes). Post-translationally, N-terminally acetylated by acetyltransferase NatA.

The protein localises to the cytoplasm. Its function is as follows. Component of the ribosome, a large ribonucleoprotein complex responsible for the synthesis of proteins in the cell. The small ribosomal subunit (SSU) binds messenger RNAs (mRNAs) and translates the encoded message by selecting cognate aminoacyl-transfer RNA (tRNA) molecules. The large subunit (LSU) contains the ribosomal catalytic site termed the peptidyl transferase center (PTC), which catalyzes the formation of peptide bonds, thereby polymerizing the amino acids delivered by tRNAs into a polypeptide chain. The nascent polypeptides leave the ribosome through a tunnel in the LSU and interact with protein factors that function in enzymatic processing, targeting, and the membrane insertion of nascent chains at the exit of the ribosomal tunnel. In Saccharomyces cerevisiae (strain ATCC 204508 / S288c) (Baker's yeast), this protein is Large ribosomal subunit protein eL6A.